A 123-amino-acid polypeptide reads, in one-letter code: Nitrogen regulatory protein GlnK2 (123 aa).

ATP contacts are provided by residues 38-40 (SLT) and Ser49. Ser49 is a binding site for ADP. Tyr62 carries the O-UMP-tyrosine modification. ATP is bound by residues Val75, 98–101 (GDGK), and Arg114. 98–101 (GDGK) contributes to the ADP binding site. 98-101 (GDGK) serves as a coordination point for AMP.

Belongs to the P(II) protein family. Homotrimer. Interacts with the glutamine synthetase 3 (GS3) in the presence of 2-oxoglutarate. Interacts in vitro with Amt1 after ammonium shock. May also interact with Amt2. In terms of processing, uridylylated on Tyr-62.

It is found in the cytoplasm. Binds the effectors ADP and ATP. Also binds AMP with high affinity, raising the possibility that AMP could be an important PII effector, at least in archaea. The change in the ATP/AMP ratio may be more relevant for describing the energy status in the cells than the ATP/ADP ratio alone. Its function is as follows. Involved in the regulation of nitrogen metabolism. Regulates the activity of its targets by protein-protein interaction in response to the nitrogen status of the cell. Increases the activity of the glutamine synthetase 3 in the presence of 2-oxoglutarate. May regulate the activity of the ammonia channel Amt2 via direct interaction. This is Nitrogen regulatory protein GlnK2 from Haloferax mediterranei (strain ATCC 33500 / DSM 1411 / JCM 8866 / NBRC 14739 / NCIMB 2177 / R-4) (Halobacterium mediterranei).